A 268-amino-acid polypeptide reads, in one-letter code: Tryptophan synthase alpha chain (268 aa).

Active-site proton acceptor residues include Glu-49 and Asp-60.

The protein belongs to the TrpA family. In terms of assembly, tetramer of two alpha and two beta chains.

The catalysed reaction is (1S,2R)-1-C-(indol-3-yl)glycerol 3-phosphate + L-serine = D-glyceraldehyde 3-phosphate + L-tryptophan + H2O. It participates in amino-acid biosynthesis; L-tryptophan biosynthesis; L-tryptophan from chorismate: step 5/5. Functionally, the alpha subunit is responsible for the aldol cleavage of indoleglycerol phosphate to indole and glyceraldehyde 3-phosphate. This chain is Tryptophan synthase alpha chain, found in Aliivibrio fischeri (strain ATCC 700601 / ES114) (Vibrio fischeri).